The following is a 66-amino-acid chain: COP9 signalosome complex subunit 6a (66 aa).

The protein belongs to the peptidase M67A family. CSN6 subfamily. As to quaternary structure, component of the CSN complex, probably composed of CSN1, CSN2, CSN3, CSN4, CSN5 (CSN5A or CSN5B), CSN6 (CSN6A or CSN6B), CSN7 and CSN8.

It localises to the cytoplasm. The protein resides in the nucleus. Component of the COP9 signalosome complex (CSN), a complex involved in various cellular and developmental processes such as photomorphogenesis and auxin and jasmonate responses. The CSN complex is an essential regulator of the ubiquitin (Ubl) conjugation pathway by mediating the deneddylation of the cullin subunits of SCF-type E3 ligase complexes, leading to decrease the Ubl ligase activity of SCF. It is involved in repression of photomorphogenesis in darkness by regulating the activity of COP1-containing Ubl ligase complexes. The polypeptide is COP9 signalosome complex subunit 6a (CSN6A) (Brassica oleracea (Wild cabbage)).